Here is a 429-residue protein sequence, read N- to C-terminus: Adenylosuccinate synthetase (429 aa).

Residues 12-18 (GDEGKGK) and 40-42 (GHT) each bind GTP. Asp-13 serves as the catalytic Proton acceptor. Mg(2+)-binding residues include Asp-13 and Gly-40. Residues 13–16 (DEGK), 38–41 (NAGH), Thr-129, Arg-143, Gln-223, Thr-238, and Arg-302 each bind IMP. His-41 acts as the Proton donor in catalysis. A substrate-binding site is contributed by 298–304 (TVTGRKR). GTP contacts are provided by residues Arg-304, 330–332 (KLD), and 412–414 (STS).

It belongs to the adenylosuccinate synthetase family. Homodimer. It depends on Mg(2+) as a cofactor.

Its subcellular location is the cytoplasm. The enzyme catalyses IMP + L-aspartate + GTP = N(6)-(1,2-dicarboxyethyl)-AMP + GDP + phosphate + 2 H(+). Its pathway is purine metabolism; AMP biosynthesis via de novo pathway; AMP from IMP: step 1/2. Plays an important role in the de novo pathway of purine nucleotide biosynthesis. Catalyzes the first committed step in the biosynthesis of AMP from IMP. The polypeptide is Adenylosuccinate synthetase (Novosphingobium aromaticivorans (strain ATCC 700278 / DSM 12444 / CCUG 56034 / CIP 105152 / NBRC 16084 / F199)).